A 599-amino-acid polypeptide reads, in one-letter code: Sulfite reductase [NADPH] flavoprotein alpha-component (599 aa).

In terms of domain architecture, Flavodoxin-like spans 64–202 (ITIISASQTG…AASEWRARVV (139 aa)). Residues 70 to 75 (SQTGNA), 117 to 120 (STQG), and 153 to 162 (LGDSSYEFFC) each bind FMN. The region spanning 234–448 (DAPLVASLSV…IEHNDNFRLP (215 aa)) is the FAD-binding FR-type domain. Residues threonine 322, alanine 356, 386-389 (RLYS), 404-406 (TVG), tyrosine 410, and 419-422 (GGAS) each bind FAD. NADP(+) is bound by residues 519 to 520 (SR), 525 to 529 (KVYVQ), and aspartate 561. Tyrosine 599 contacts FAD.

It belongs to the NADPH-dependent sulphite reductase flavoprotein subunit CysJ family. This sequence in the N-terminal section; belongs to the flavodoxin family. In the C-terminal section; belongs to the flavoprotein pyridine nucleotide cytochrome reductase family. Alpha(8)-beta(8). The alpha component is a flavoprotein, the beta component is a hemoprotein. The cofactor is FAD. FMN serves as cofactor.

The catalysed reaction is hydrogen sulfide + 3 NADP(+) + 3 H2O = sulfite + 3 NADPH + 4 H(+). It participates in sulfur metabolism; hydrogen sulfide biosynthesis; hydrogen sulfide from sulfite (NADPH route): step 1/1. In terms of biological role, component of the sulfite reductase complex that catalyzes the 6-electron reduction of sulfite to sulfide. This is one of several activities required for the biosynthesis of L-cysteine from sulfate. The flavoprotein component catalyzes the electron flow from NADPH -&gt; FAD -&gt; FMN to the hemoprotein component. The protein is Sulfite reductase [NADPH] flavoprotein alpha-component of Escherichia coli (strain K12).